Here is a 326-residue protein sequence, read N- to C-terminus: Lipoyl synthase (326 aa).

[4Fe-4S] cluster contacts are provided by cysteine 74, cysteine 79, cysteine 85, cysteine 100, cysteine 104, cysteine 107, and serine 314. The Radical SAM core domain occupies 85–303; sequence CFGRGTATFM…EEEAYKMGFS (219 aa).

Belongs to the radical SAM superfamily. Lipoyl synthase family. Requires [4Fe-4S] cluster as cofactor.

Its subcellular location is the cytoplasm. It catalyses the reaction [[Fe-S] cluster scaffold protein carrying a second [4Fe-4S](2+) cluster] + N(6)-octanoyl-L-lysyl-[protein] + 2 oxidized [2Fe-2S]-[ferredoxin] + 2 S-adenosyl-L-methionine + 4 H(+) = [[Fe-S] cluster scaffold protein] + N(6)-[(R)-dihydrolipoyl]-L-lysyl-[protein] + 4 Fe(3+) + 2 hydrogen sulfide + 2 5'-deoxyadenosine + 2 L-methionine + 2 reduced [2Fe-2S]-[ferredoxin]. It functions in the pathway protein modification; protein lipoylation via endogenous pathway; protein N(6)-(lipoyl)lysine from octanoyl-[acyl-carrier-protein]: step 2/2. Catalyzes the radical-mediated insertion of two sulfur atoms into the C-6 and C-8 positions of the octanoyl moiety bound to the lipoyl domains of lipoate-dependent enzymes, thereby converting the octanoylated domains into lipoylated derivatives. This chain is Lipoyl synthase, found in Acidovorax ebreus (strain TPSY) (Diaphorobacter sp. (strain TPSY)).